Here is a 484-residue protein sequence, read N- to C-terminus: Serine hydroxymethyltransferase, cytosolic (484 aa).

Residue Ala2 is modified to N-acetylalanine. The residue at position 6 (Asn6) is a Deamidated asparagine; alternate. Residues 6 to 7 constitute a cross-link (isoaspartyl glycine isopeptide (Asn-Gly); alternate); it reads NG. Cys204 serves as the catalytic Nucleophile. The active-site Proton donor is His256. Lys257 is modified (N6-(pyridoxal phosphate)lysine).

This sequence belongs to the SHMT family. In terms of assembly, homotetramer. Identified in complex with ABRAXAS2 and the other subunits of the BRISC complex, at least composed of ABRAXAS2, BRCC3/BRCC36, BABAM2 and BABAM1/NBA1. Pyridoxal 5'-phosphate is required as a cofactor. Deamidation of asparagine produces alternatively aspartate or isoaspartate, which in turn can be converted to aspartate through carboxylmethylation/demethylation.

It localises to the cytoplasm. The enzyme catalyses (6R)-5,10-methylene-5,6,7,8-tetrahydrofolate + glycine + H2O = (6S)-5,6,7,8-tetrahydrofolate + L-serine. The protein operates within one-carbon metabolism; tetrahydrofolate interconversion. Interconversion of serine and glycine. This chain is Serine hydroxymethyltransferase, cytosolic (SHMT1), found in Oryctolagus cuniculus (Rabbit).